Consider the following 318-residue polypeptide: MARRRKGRPIDGVILIDKPAGITSNDTLQKVKRIYFAEKAGHTGALDPLATGMLPLCFGEATKFSQFLLDSDKRYRVVAKLGERTNTSDSDGEVVETREVKVDRGQLERCIAKFRGTTDQIPSMFSALKHEGRPLYEYAREGIEVPRKSRKITVYSIELIRFEGHEVEMEVHCSKGTYIRTITDDLGEMLGCGAHVTYLRRTGVSNYPYENMVTIEHLEALLEKAHREEISPRELLDPLLMPMDSAVQDLPEVNMITELADHVLHGQPVQVFGAPQDGIVRMTSGEERLFIGIGHIDDDGRVAPKRLVVFRDEIEEDK.

Asp47 acts as the Nucleophile in catalysis.

Belongs to the pseudouridine synthase TruB family. Type 1 subfamily.

The enzyme catalyses uridine(55) in tRNA = pseudouridine(55) in tRNA. In terms of biological role, responsible for synthesis of pseudouridine from uracil-55 in the psi GC loop of transfer RNAs. The protein is tRNA pseudouridine synthase B of Aliivibrio salmonicida (strain LFI1238) (Vibrio salmonicida (strain LFI1238)).